A 459-amino-acid chain; its full sequence is Ribulose bisphosphate carboxylase large chain (459 aa).

Residue K4 is modified to N6,N6,N6-trimethyllysine. Residues N113 and T163 each coordinate substrate. The active-site Proton acceptor is K165. K167 contributes to the substrate binding site. 3 residues coordinate Mg(2+): K191, D193, and E194. K191 carries the N6-carboxylysine modification. H284 acts as the Proton acceptor in catalysis. R285, H317, and S369 together coordinate substrate.

This sequence belongs to the RuBisCO large chain family. Type I subfamily. In terms of assembly, heterohexadecamer of 8 large chains and 8 small chains; disulfide-linked. The disulfide link is formed within the large subunit homodimers. Mg(2+) serves as cofactor. The disulfide bond which can form in the large chain dimeric partners within the hexadecamer appears to be associated with oxidative stress and protein turnover.

The protein resides in the plastid. It is found in the chloroplast. It carries out the reaction 2 (2R)-3-phosphoglycerate + 2 H(+) = D-ribulose 1,5-bisphosphate + CO2 + H2O. The catalysed reaction is D-ribulose 1,5-bisphosphate + O2 = 2-phosphoglycolate + (2R)-3-phosphoglycerate + 2 H(+). Its function is as follows. RuBisCO catalyzes two reactions: the carboxylation of D-ribulose 1,5-bisphosphate, the primary event in carbon dioxide fixation, as well as the oxidative fragmentation of the pentose substrate in the photorespiration process. Both reactions occur simultaneously and in competition at the same active site. The protein is Ribulose bisphosphate carboxylase large chain of Heuchera micrantha (Alum root).